The sequence spans 483 residues: Serine hydroxymethyltransferase, cytosolic (483 aa).

Lysine 257 bears the N6-(pyridoxal phosphate)lysine mark.

This sequence belongs to the SHMT family. Homotetramer. Identified in complex with ABRAXAS2 and the other subunits of the BRISC complex, at least composed of ABRAXAS2, BRCC3/BRCC36, BABAM2 and BABAM1/NBA1. Pyridoxal 5'-phosphate is required as a cofactor.

The protein localises to the cytoplasm. The catalysed reaction is (6R)-5,10-methylene-5,6,7,8-tetrahydrofolate + glycine + H2O = (6S)-5,6,7,8-tetrahydrofolate + L-serine. It functions in the pathway one-carbon metabolism; tetrahydrofolate interconversion. Interconversion of serine and glycine. The polypeptide is Serine hydroxymethyltransferase, cytosolic (SHMT1) (Pongo abelii (Sumatran orangutan)).